Consider the following 351-residue polypeptide: Phospho-N-acetylmuramoyl-pentapeptide-transferase (351 aa).

A run of 10 helical transmembrane segments spans residues 17–37, 62–82, 85–105, 130–150, 163–183, 190–210, 230–250, 254–274, 281–301, and 328–348; these read MAYA…HIIL, GIPT…LVFW, ILNV…FLGF, IIFS…HVSI, LGVF…NSFN, GLAI…AYIT, LVIF…FNAY, IMMG…TALI, FSIL…QVIV, and QVVI…LSTI.

It belongs to the glycosyltransferase 4 family. MraY subfamily. It depends on Mg(2+) as a cofactor.

The protein localises to the cell inner membrane. It carries out the reaction UDP-N-acetyl-alpha-D-muramoyl-L-alanyl-gamma-D-glutamyl-meso-2,6-diaminopimeloyl-D-alanyl-D-alanine + di-trans,octa-cis-undecaprenyl phosphate = di-trans,octa-cis-undecaprenyl diphospho-N-acetyl-alpha-D-muramoyl-L-alanyl-D-glutamyl-meso-2,6-diaminopimeloyl-D-alanyl-D-alanine + UMP. It participates in cell wall biogenesis; peptidoglycan biosynthesis. Catalyzes the initial step of the lipid cycle reactions in the biosynthesis of the cell wall peptidoglycan: transfers peptidoglycan precursor phospho-MurNAc-pentapeptide from UDP-MurNAc-pentapeptide onto the lipid carrier undecaprenyl phosphate, yielding undecaprenyl-pyrophosphoryl-MurNAc-pentapeptide, known as lipid I. In Borreliella afzelii (strain PKo) (Borrelia afzelii), this protein is Phospho-N-acetylmuramoyl-pentapeptide-transferase.